The following is a 498-amino-acid chain: Glutathione synthetase large chain (498 aa).

Arginine 128 serves as a coordination point for substrate. Glutamate 146 contributes to the ATP binding site. Glutamate 146 and asparagine 148 together coordinate Mg(2+). Substrate-binding positions include 150 to 153, 233 to 235, glutamine 239, and 291 to 294; these read ISVS, ERN, and RVGY. Position 330 (lysine 330) interacts with ATP. Serine 356 carries the phosphoserine modification. Residues 387–396, tyrosine 398, 420–423, and glutamate 446 each bind ATP; these read KPQREGGGNN and MRYI. Glutamate 391 contributes to the Mg(2+) binding site. Position 473 (arginine 473) interacts with substrate. ATP-binding residues include lysine 475 and glutamate 481. Residue 484–485 coordinates substrate; it reads VA.

It belongs to the eukaryotic GSH synthase family. In terms of assembly, heterodimer composed of a large and a small chain. The cofactor is Mg(2+).

The enzyme catalyses gamma-L-glutamyl-L-cysteine + glycine + ATP = glutathione + ADP + phosphate + H(+). It functions in the pathway sulfur metabolism; glutathione biosynthesis; glutathione from L-cysteine and L-glutamate: step 2/2. The protein is Glutathione synthetase large chain (gsa1) of Schizosaccharomyces pombe (strain 972 / ATCC 24843) (Fission yeast).